The sequence spans 262 residues: Acyl-[acyl-carrier-protein]--UDP-N-acetylglucosamine O-acyltransferase (262 aa).

Belongs to the transferase hexapeptide repeat family. LpxA subfamily. As to quaternary structure, homotrimer.

The protein localises to the cytoplasm. The enzyme catalyses a (3R)-hydroxyacyl-[ACP] + UDP-N-acetyl-alpha-D-glucosamine = a UDP-3-O-[(3R)-3-hydroxyacyl]-N-acetyl-alpha-D-glucosamine + holo-[ACP]. It functions in the pathway glycolipid biosynthesis; lipid IV(A) biosynthesis; lipid IV(A) from (3R)-3-hydroxytetradecanoyl-[acyl-carrier-protein] and UDP-N-acetyl-alpha-D-glucosamine: step 1/6. Its function is as follows. Involved in the biosynthesis of lipid A, a phosphorylated glycolipid that anchors the lipopolysaccharide to the outer membrane of the cell. In Burkholderia lata (strain ATCC 17760 / DSM 23089 / LMG 22485 / NCIMB 9086 / R18194 / 383), this protein is Acyl-[acyl-carrier-protein]--UDP-N-acetylglucosamine O-acyltransferase.